Consider the following 101-residue polypeptide: Small ribosomal subunit protein uS14 (101 aa).

The protein belongs to the universal ribosomal protein uS14 family. As to quaternary structure, part of the 30S ribosomal subunit. Contacts proteins S3 and S10.

Functionally, binds 16S rRNA, required for the assembly of 30S particles and may also be responsible for determining the conformation of the 16S rRNA at the A site. This is Small ribosomal subunit protein uS14 from Orientia tsutsugamushi (strain Boryong) (Rickettsia tsutsugamushi).